Consider the following 131-residue polypeptide: MMCKALVFAVLLLAVPLERADSRALRTPVDAIQFVEQFLEHYNDLLNIDDLENQTGDQLESPQPLSSGLKVAEYPKWVDVPSQNDNTWFRLLRGALANRKRALPDRAKRGWNRGCFGLKLDRIGSLSGLGC.

Positions 1–20 are cleaved as a signal peptide; sequence MMCKALVFAVLLLAVPLERA. Residues 21 to 109 constitute a propeptide that is removed on maturation; it reads DSRALRTPVD…KRALPDRAKR (89 aa). Cys-115 and Cys-131 are oxidised to a cystine.

This sequence belongs to the natriuretic peptide family. Highly expressed in brain and liver, and moderately in gut, gills and heart. Expressed to a low level in atrium, ventricle and liver of fresh water eels.

It is found in the secreted. Its function is as follows. Hormone which plays a role in endochondral ossification through regulation of cartilaginous growth plate chondrocytes proliferation and differentiation. May also be vasoactive and natriuretic. May be important for freshwater adaptation. This Anguilla japonica (Japanese eel) protein is C-type natriuretic peptide (cnp).